The following is a 425-amino-acid chain: Glutamate-1-semialdehyde 2,1-aminomutase (425 aa).

K265 carries the N6-(pyridoxal phosphate)lysine modification.

This sequence belongs to the class-III pyridoxal-phosphate-dependent aminotransferase family. HemL subfamily. As to quaternary structure, homodimer. Requires pyridoxal 5'-phosphate as cofactor.

The protein resides in the cytoplasm. The enzyme catalyses (S)-4-amino-5-oxopentanoate = 5-aminolevulinate. The protein operates within porphyrin-containing compound metabolism; protoporphyrin-IX biosynthesis; 5-aminolevulinate from L-glutamyl-tRNA(Glu): step 2/2. This is Glutamate-1-semialdehyde 2,1-aminomutase from Laribacter hongkongensis (strain HLHK9).